Consider the following 287-residue polypeptide: GPN-loop GTPase 3 (287 aa).

A GTP-binding site is contributed by 12 to 17 (GAGKST). Positions 69–71 (GPN) match the Gly-Pro-Asn (GPN)-loop; involved in dimer interface motif. Position 172–175 (172–175 (SKMD)) interacts with GTP.

This sequence belongs to the GPN-loop GTPase family. In terms of assembly, heterodimers with GPN1 or GPN2. Binds to RNA polymerase II (RNAPII).

Its function is as follows. Small GTPase required for proper nuclear import of RNA polymerase II and III (RNAPII and RNAPIII). May act at an RNAP assembly step prior to nuclear import. The polypeptide is GPN-loop GTPase 3 (Cryptococcus neoformans var. neoformans serotype D (strain B-3501A) (Filobasidiella neoformans)).